The sequence spans 243 residues: MQHFFYKLILSYDGTFYCGYQKQPQKKTVQQTFEKALKKMTHQNIPTFAASRTDKGVHSQGQTLHFQTTFSLKPKHFQKTLNYLLPPDIRVRQMHFATPNFHARYSAKSKIYQYVFSKKPLNAFNHHFQIFADKFDFVKITKALKFIEGTHNFFAFTSETQPKNFSKTIFQASLKETVHKYILVFHGNGFLKYMIRFLVGSLIEIGKNKFSLEQFQAMLLGNKTKKATLLAPAKALVLKKIFY.

Asp54 serves as the catalytic Nucleophile. Tyr112 contributes to the substrate binding site.

Belongs to the tRNA pseudouridine synthase TruA family. In terms of assembly, homodimer.

The catalysed reaction is uridine(38/39/40) in tRNA = pseudouridine(38/39/40) in tRNA. Functionally, formation of pseudouridine at positions 38, 39 and 40 in the anticodon stem and loop of transfer RNAs. This chain is tRNA pseudouridine synthase A, found in Aster yellows witches'-broom phytoplasma (strain AYWB).